The following is a 25-amino-acid chain: Small ribosomal subunit protein eS32A (25 aa).

Residues 1-25 are disordered; the sequence is MRDKWRKKRVRRLKRKRRKMRARSK.

Belongs to the eukaryotic ribosomal protein eS32 family. In terms of assembly, component of the large ribosomal subunit (LSU). Mature yeast ribosomes consist of a small (40S) and a large (60S) subunit. The 40S small subunit contains 1 molecule of ribosomal RNA (18S rRNA) and at least 33 different proteins. The large 60S subunit contains 3 rRNA molecules (25S, 5.8S and 5S rRNA) and at least 46 different proteins.

Its subcellular location is the cytoplasm. It localises to the nucleus. Functionally, component of the ribosome, a large ribonucleoprotein complex responsible for the synthesis of proteins in the cell. The small ribosomal subunit (SSU) binds messenger RNAs (mRNAs) and translates the encoded message by selecting cognate aminoacyl-transfer RNA (tRNA) molecules. The large subunit (LSU) contains the ribosomal catalytic site termed the peptidyl transferase center (PTC), which catalyzes the formation of peptide bonds, thereby polymerizing the amino acids delivered by tRNAs into a polypeptide chain. The nascent polypeptides leave the ribosome through a tunnel in the LSU and interact with protein factors that function in enzymatic processing, targeting, and the membrane insertion of nascent chains at the exit of the ribosomal tunnel. The chain is Small ribosomal subunit protein eS32A (rpl4101) from Schizosaccharomyces pombe (strain 972 / ATCC 24843) (Fission yeast).